The following is a 206-amino-acid chain: dITP/XTP pyrophosphatase (206 aa).

10–15 (SRNAKK) is a binding site for substrate. The active-site Proton acceptor is D75. Position 75 (D75) interacts with Mg(2+). Substrate is bound by residues S76, 158 to 161 (FGYD), K181, and 186 to 187 (HR).

The protein belongs to the HAM1 NTPase family. In terms of assembly, homodimer. The cofactor is Mg(2+).

It catalyses the reaction XTP + H2O = XMP + diphosphate + H(+). The enzyme catalyses dITP + H2O = dIMP + diphosphate + H(+). It carries out the reaction ITP + H2O = IMP + diphosphate + H(+). Functionally, pyrophosphatase that catalyzes the hydrolysis of nucleoside triphosphates to their monophosphate derivatives, with a high preference for the non-canonical purine nucleotides XTP (xanthosine triphosphate), dITP (deoxyinosine triphosphate) and ITP. Seems to function as a house-cleaning enzyme that removes non-canonical purine nucleotides from the nucleotide pool, thus preventing their incorporation into DNA/RNA and avoiding chromosomal lesions. The polypeptide is dITP/XTP pyrophosphatase (Nocardia farcinica (strain IFM 10152)).